Here is an 85-residue protein sequence, read N- to C-terminus: Small ribosomal subunit protein uS15 (85 aa).

The protein belongs to the universal ribosomal protein uS15 family. Part of the 30S ribosomal subunit. Forms a bridge to the 50S subunit in the 70S ribosome, contacting the 23S rRNA.

One of the primary rRNA binding proteins, it binds directly to 16S rRNA where it helps nucleate assembly of the platform of the 30S subunit by binding and bridging several RNA helices of the 16S rRNA. In terms of biological role, forms an intersubunit bridge (bridge B4) with the 23S rRNA of the 50S subunit in the ribosome. The sequence is that of Small ribosomal subunit protein uS15 from Fusobacterium nucleatum subsp. nucleatum (strain ATCC 25586 / DSM 15643 / BCRC 10681 / CIP 101130 / JCM 8532 / KCTC 2640 / LMG 13131 / VPI 4355).